The following is a 341-amino-acid chain: UDP-3-O-acylglucosamine N-acyltransferase (341 aa).

The active-site Proton acceptor is His241.

This sequence belongs to the transferase hexapeptide repeat family. LpxD subfamily. As to quaternary structure, homotrimer.

It carries out the reaction a UDP-3-O-[(3R)-3-hydroxyacyl]-alpha-D-glucosamine + a (3R)-hydroxyacyl-[ACP] = a UDP-2-N,3-O-bis[(3R)-3-hydroxyacyl]-alpha-D-glucosamine + holo-[ACP] + H(+). It participates in bacterial outer membrane biogenesis; LPS lipid A biosynthesis. In terms of biological role, catalyzes the N-acylation of UDP-3-O-acylglucosamine using 3-hydroxyacyl-ACP as the acyl donor. Is involved in the biosynthesis of lipid A, a phosphorylated glycolipid that anchors the lipopolysaccharide to the outer membrane of the cell. In Haemophilus ducreyi (strain 35000HP / ATCC 700724), this protein is UDP-3-O-acylglucosamine N-acyltransferase.